Reading from the N-terminus, the 140-residue chain is Nucleoside diphosphate kinase (140 aa).

ATP contacts are provided by Lys-11, Phe-59, Arg-87, Thr-93, Arg-104, and Asn-114. His-117 serves as the catalytic Pros-phosphohistidine intermediate.

Belongs to the NDK family. As to quaternary structure, homotetramer. Requires Mg(2+) as cofactor.

It localises to the cytoplasm. It catalyses the reaction a 2'-deoxyribonucleoside 5'-diphosphate + ATP = a 2'-deoxyribonucleoside 5'-triphosphate + ADP. It carries out the reaction a ribonucleoside 5'-diphosphate + ATP = a ribonucleoside 5'-triphosphate + ADP. In terms of biological role, major role in the synthesis of nucleoside triphosphates other than ATP. The ATP gamma phosphate is transferred to the NDP beta phosphate via a ping-pong mechanism, using a phosphorylated active-site intermediate. This is Nucleoside diphosphate kinase from Rickettsia prowazekii (strain Madrid E).